Here is a 77-residue protein sequence, read N- to C-terminus: Subtilisin-chymotrypsin inhibitor CI-1C (77 aa).

This sequence belongs to the protease inhibitor I13 (potato type I serine protease inhibitor) family.

Inhibits both subtilisin and chymotrypsin. This is Subtilisin-chymotrypsin inhibitor CI-1C from Hordeum vulgare (Barley).